The following is a 349-amino-acid chain: Homeobox-leucine zipper protein HOX5 (349 aa).

Positions 83-142 (APEKKRRLTAEQVQMLERSFEEENKLEPERKTELARRLGMAPRQVAVWFQNRRARWKTKQ) form a DNA-binding region, homeobox. The segment at 141 to 185 (KQLEHDFDRLKAAYDALAADHHALLSDNDRLRAQVISLTEKLQDK) is leucine-zipper. The disordered stretch occupies residues 181 to 253 (KLQDKETSPS…GTNDDGDGGA (73 aa)). Positions 188–198 (SPSSATITTAA) are enriched in low complexity.

Belongs to the HD-ZIP homeobox family. Class I subfamily. As to quaternary structure, homodimer. May form a heterodimer with HOX4. As to expression, expressed in seedlings, roots, leaves, nodes, internodes, flowers and embryo.

The protein localises to the nucleus. Its function is as follows. Probable transcription activator that binds to the DNA sequence 5'-CAAT[AT]ATTG-3'. The sequence is that of Homeobox-leucine zipper protein HOX5 (HOX5) from Oryza sativa subsp. japonica (Rice).